Consider the following 465-residue polypeptide: MEKLDESKFEQRLQLWALRIPRELSSAVTRLLRSGYLLDKPRVKTVVEDPEGDKNRLVILSEKIQKPDLSDMPQQELDSLKQLCNVDVVPYTLTLGYSYWSAGHVAHLNISDDLLPYKNVIAKVIYDKNYPRIQTVANKVGTITNEFRVPKFEILAGKNDMVTEVKQYGATFKLDYGLVYWNSRLDHEHIRLVSLFKKGDVICDMFAGIGPFAIPAAQKGCVVYANDLNPDSVHYLRTNAKINKVDDYIFAYNMDARVFMQNLMTVPGLETGSDCQVAADESYPKEGVPANENSSSNGNHNDVREGSQNGANESSVASTTAKKRQQTSEECESDCQDGDASQTKRRNNKRVRGPGPPPSKPWEHFDHVLMNLPASALQFLDCFDGLVQKKYWTGSLPWIHCYCFIRSSESEESILSNKLNAKIAEPIFHRVRDVAPNKAMFCLSFKLPMECLREDDSENHIESVA.

Residues His-189, 227–228 (DL), and 255–256 (DA) contribute to the S-adenosyl-L-methionine site. Residues 283 to 362 (YPKEGVPANE…GPGPPPSKPW (80 aa)) form a disordered region. The span at 291 to 320 (NENSSSNGNHNDVREGSQNGANESSVASTT) shows a compositional bias: polar residues. The span at 343-352 (TKRRNNKRVR) shows a compositional bias: basic residues. Residue Asn-371 coordinates S-adenosyl-L-methionine.

It belongs to the class I-like SAM-binding methyltransferase superfamily. TRM5/TYW2 family. As to quaternary structure, monomer.

It localises to the mitochondrion matrix. It is found in the nucleus. Its subcellular location is the cytoplasm. It catalyses the reaction guanosine(37) in tRNA + S-adenosyl-L-methionine = N(1)-methylguanosine(37) in tRNA + S-adenosyl-L-homocysteine + H(+). Specifically methylates the N1 position of guanosine-37 in various cytoplasmic and mitochondrial tRNAs. Methylation is not dependent on the nature of the nucleoside 5' of the target nucleoside. This is the first step in the biosynthesis of wybutosine (yW), a modified base adjacent to the anticodon of tRNAs and required for accurate decoding. The polypeptide is tRNA (guanine(37)-N(1))-methyltransferase (Sorghum bicolor (Sorghum)).